The following is a 642-amino-acid chain: Threonine--tRNA ligase (642 aa).

The region spanning 1-61 (MPVITLPDGS…VDDASVAIIT (61 aa)) is the TGS domain. The interval 243–534 (DHRKIGKQLD…LTEEYAGFFP (292 aa)) is catalytic. 3 residues coordinate Zn(2+): Cys334, His385, and His511.

The protein belongs to the class-II aminoacyl-tRNA synthetase family. In terms of assembly, homodimer. The cofactor is Zn(2+).

Its subcellular location is the cytoplasm. The catalysed reaction is tRNA(Thr) + L-threonine + ATP = L-threonyl-tRNA(Thr) + AMP + diphosphate + H(+). Functionally, catalyzes the attachment of threonine to tRNA(Thr) in a two-step reaction: L-threonine is first activated by ATP to form Thr-AMP and then transferred to the acceptor end of tRNA(Thr). Also edits incorrectly charged L-seryl-tRNA(Thr). The protein is Threonine--tRNA ligase of Erwinia tasmaniensis (strain DSM 17950 / CFBP 7177 / CIP 109463 / NCPPB 4357 / Et1/99).